A 670-amino-acid chain; its full sequence is Protein phosphatase 1 regulatory subunit 15A (670 aa).

Residues 1–21 (MAPGQMPHQPAPWRGTHPLFL) are Cytoplasmic-facing. The required for localization in the endoplasmic reticulum stretch occupies residues 1-60 (MAPGQMPHQPAPWRGTHPLFLLSPLMGLLSRAWSLLRAPGPPEPWLVEAVTEADQGGAGL). Positions 22–39 (LSPLMGLLSRAWSLLRAP) form an intramembrane region, helical. The Cytoplasmic portion of the chain corresponds to 40–670 (GPPEPWLVEA…PSLDLSGRRG (631 aa)). Disordered stretches follow at residues 76-144 (GRHP…GQPA), 159-178 (PGEE…NEVT), and 191-501 (PGEE…EKWG). Positions 78–87 (HPQEETKDSG) are enriched in basic and acidic residues. A compositionally biased stretch (acidic residues) spans 191–202 (PGEEEEEEEENG). Residues 254 to 265 (KDKQAEKGDADP) show a composition bias toward basic and acidic residues. Over residues 271–288 (SLAQRPSLRTWQHPSSAI) the composition is skewed to polar residues. Over residues 289–299 (TEEEEDRDSEE) the composition is skewed to acidic residues. Residues 302–312 (ASSSVPLTSAF) show a composition bias toward polar residues. 2 stretches are compositionally biased toward acidic residues: residues 321-344 (EDTE…EGEA) and 367-385 (DTEE…EGEA). 4 tandem repeats follow at residues 355-381 (AFLS…ATED), 396-426 (AFLS…GEAE), 436-462 (AFLS…DNES), and 478-511 (ALLR…FRVA). The 4 X 34 AA approximate repeats stretch occupies residues 355 to 511 (AFLSAWVYRP…EAESCPFRVA (157 aa)). Residues 355 to 511 (AFLSAWVYRP…EAESCPFRVA (157 aa)) form an interaction with SMAD7 region. Residues 388–397 (SSATPPTSAF) show a composition bias toward polar residues. A Phosphotyrosine modification is found at Tyr403. Acidic residues predominate over residues 407-425 (DTEEEEDCDSEATEDEGEA). Tyr443 carries the phosphotyrosine modification. Residues 448 to 461 (DTEEEDEYEDEDNE) are compositionally biased toward acidic residues. The tract at residues 484-556 (IYQPGEKTDG…DLERLLKTRK (73 aa)) is interaction with KMT2A/MLL1. Residues 489–501 (EKTDGGEAAEKWG) are compositionally biased toward basic and acidic residues. Tyr513 carries the phosphotyrosine modification. An interaction with SMARCB1 region spans residues 537–584 (KSAQTPTRHQDLERLLKTRKVRFSEKVSIHPLVVWAGPAQAARRGPWE). Residues 622 to 670 (NPPTSLATVPAPTQTSPMTPIQATPLSHALASPSPPCVSPSLDLSGRRG) form a disordered region. The span at 623–645 (PPTSLATVPAPTQTSPMTPIQAT) shows a compositional bias: polar residues.

It belongs to the PPP1R15 family. Interacts with PPP1CA. Interacts with EIF2S1. Interacts with PCNA. Interacts with LYN and KMT2A/MLL1. Interacts with PPP1R1A and SMARCB1. Interacts with SMAD7. Interacts with BAG1. Interacts with NOX4. In terms of processing, phosphorylated on tyrosine by LYN; which impairs its antiproliferative activity. Polyubiquitinated. Exhibits a rapid proteasomal degradation with a half-life under 1 hour, ubiquitination depends on endoplasmic reticulum association.

The protein localises to the endoplasmic reticulum membrane. It localises to the mitochondrion outer membrane. Functionally, recruits the serine/threonine-protein phosphatase PPP1CA to prevents excessive phosphorylation of the translation initiation factor eIF-2A/EIF2S1, thereby reversing the shut-off of protein synthesis initiated by stress-inducible kinases and facilitating recovery of cells from stress. Down-regulates the TGF-beta signaling pathway by promoting dephosphorylation of TGFB1 by PP1. May promote apoptosis by inducing TP53 phosphorylation on 'Ser-15'. Plays an essential role in autophagy by tuning translation during starvation, thus enabling lysosomal biogenesis and a sustained autophagic flux. The chain is Protein phosphatase 1 regulatory subunit 15A (PPP1R15A) from Bos taurus (Bovine).